The sequence spans 434 residues: Enolase (434 aa).

Gln-163 lines the (2R)-2-phosphoglycerate pocket. The active-site Proton donor is the Glu-205. Positions 242, 289, and 316 each coordinate Mg(2+). 4 residues coordinate (2R)-2-phosphoglycerate: Lys-341, Arg-370, Ser-371, and Lys-392. Residue Lys-341 is the Proton acceptor of the active site.

It belongs to the enolase family. It depends on Mg(2+) as a cofactor.

It is found in the cytoplasm. Its subcellular location is the secreted. The protein localises to the cell surface. It catalyses the reaction (2R)-2-phosphoglycerate = phosphoenolpyruvate + H2O. It participates in carbohydrate degradation; glycolysis; pyruvate from D-glyceraldehyde 3-phosphate: step 4/5. Its function is as follows. Catalyzes the reversible conversion of 2-phosphoglycerate (2-PG) into phosphoenolpyruvate (PEP). It is essential for the degradation of carbohydrates via glycolysis. This chain is Enolase, found in Lacticaseibacillus paracasei (strain ATCC 334 / BCRC 17002 / CCUG 31169 / CIP 107868 / KCTC 3260 / NRRL B-441) (Lactobacillus paracasei).